A 388-amino-acid polypeptide reads, in one-letter code: Succinate--CoA ligase [ADP-forming] subunit beta (388 aa).

Residues 9–244 enclose the ATP-grasp domain; it reads KEILRKFGVA…LDEEDPAEIE (236 aa). ATP-binding positions include Lys-46, 53 to 55, Glu-99, Ala-102, and Glu-107; that span reads GRG. Residues Asn-199 and Asp-213 each coordinate Mg(2+). Residues Asn-264 and 321–323 each bind substrate; that span reads GIM.

The protein belongs to the succinate/malate CoA ligase beta subunit family. As to quaternary structure, heterotetramer of two alpha and two beta subunits. Mg(2+) serves as cofactor.

It catalyses the reaction succinate + ATP + CoA = succinyl-CoA + ADP + phosphate. The enzyme catalyses GTP + succinate + CoA = succinyl-CoA + GDP + phosphate. It participates in carbohydrate metabolism; tricarboxylic acid cycle; succinate from succinyl-CoA (ligase route): step 1/1. Succinyl-CoA synthetase functions in the citric acid cycle (TCA), coupling the hydrolysis of succinyl-CoA to the synthesis of either ATP or GTP and thus represents the only step of substrate-level phosphorylation in the TCA. The beta subunit provides nucleotide specificity of the enzyme and binds the substrate succinate, while the binding sites for coenzyme A and phosphate are found in the alpha subunit. In Burkholderia thailandensis (strain ATCC 700388 / DSM 13276 / CCUG 48851 / CIP 106301 / E264), this protein is Succinate--CoA ligase [ADP-forming] subunit beta.